A 903-amino-acid chain; its full sequence is Valine--tRNA ligase (903 aa).

The segment covering 1-15 has biased composition (polar residues); the sequence is MVCVTDQNNETTSQN. A disordered region spans residues 1–21; that stretch reads MVCVTDQNNETTSQNRADKLP. A 'HIGH' region motif is present at residues 61–71; the sequence is PNVTGQLHMGH. Positions 552-556 match the 'KMSKS' region motif; sequence KMSKS. K555 lines the ATP pocket. Residues 836–903 adopt a coiled-coil conformation; it reads TVDVAAERKR…RINKRLEELA (68 aa).

The protein belongs to the class-I aminoacyl-tRNA synthetase family. ValS type 1 subfamily. As to quaternary structure, monomer.

It localises to the cytoplasm. The catalysed reaction is tRNA(Val) + L-valine + ATP = L-valyl-tRNA(Val) + AMP + diphosphate. Its function is as follows. Catalyzes the attachment of valine to tRNA(Val). As ValRS can inadvertently accommodate and process structurally similar amino acids such as threonine, to avoid such errors, it has a 'posttransfer' editing activity that hydrolyzes mischarged Thr-tRNA(Val) in a tRNA-dependent manner. This chain is Valine--tRNA ligase, found in Corynebacterium glutamicum (strain ATCC 13032 / DSM 20300 / JCM 1318 / BCRC 11384 / CCUG 27702 / LMG 3730 / NBRC 12168 / NCIMB 10025 / NRRL B-2784 / 534).